The primary structure comprises 714 residues: Transcription factor SFL2 (714 aa).

A DNA-binding region spans residues 15 to 134 (AFVHKLYTML…LVYIKRRSSS (120 aa)). 3 disordered regions span residues 187–467 (YYQQ…VGVT), 565–658 (STSV…NNTN), and 670–714 (SHSQ…NMNK). 2 stretches are compositionally biased toward pro residues: residues 193–207 (GQVP…PPHQ) and 223–235 (QPPP…PPQP). Residues 266-275 (LDQTQPLSYT) are compositionally biased toward polar residues. Residues 276–285 (PQLEYQQQQY) are compositionally biased toward low complexity. Residues 286-296 (PQPPLPPPPPQ) show a composition bias toward pro residues. Polar residues-rich tracts occupy residues 310–321 (DNLSRPSPNEQH) and 354–372 (SEGS…LNNE). The span at 376-389 (ESSTSSSSTTVTST) shows a compositional bias: low complexity. Polar residues-rich tracts occupy residues 413–435 (SRMN…TQNG) and 444–461 (LIPS…TGTD). The segment covering 574-591 (GPFSTSTSTSTTSPTLSS) has biased composition (low complexity). A compositionally biased stretch (polar residues) spans 599–608 (EPQNSTIANG). 2 stretches are compositionally biased toward low complexity: residues 609–641 (TSIR…RQLS) and 648–658 (QQQQQPNNNTN). Positions 703 to 714 (SKSDDDTDNMNK) are enriched in basic and acidic residues.

It belongs to the HSF family.

It localises to the nucleus. Its function is as follows. Transcription factor that plays a role of activator of filamentous growth and which is involved in invasive growth at a high temperature. Required for human oral epithelium colonization and damage. Promotes filamentous growth in EFG1- and FLO8-dependent manners. Antagonizes functions of SFL1. In Candida albicans (strain SC5314 / ATCC MYA-2876) (Yeast), this protein is Transcription factor SFL2 (SFL2).